The sequence spans 358 residues: S-adenosylmethionine decarboxylase proenzyme (358 aa).

Residues glutamate 11 and glutamate 14 contribute to the active site. Serine 71 functions as the Schiff-base intermediate with substrate; via pyruvic acid in the catalytic mechanism. Position 71 is a pyruvic acid (Ser); by autocatalysis (serine 71). Catalysis depends on cysteine 85, which acts as the Proton donor; for catalytic activity. Active-site proton acceptor; for processing activity residues include serine 234 and histidine 247.

This sequence belongs to the eukaryotic AdoMetDC family. Pyruvate serves as cofactor. Is synthesized initially as an inactive proenzyme. Formation of the active enzyme involves a self-maturation process in which the active site pyruvoyl group is generated from an internal serine residue via an autocatalytic post-translational modification. Two non-identical subunits are generated from the proenzyme in this reaction, and the pyruvate is formed at the N-terminus of the alpha chain, which is derived from the carboxyl end of the proenzyme. The post-translation cleavage follows an unusual pathway, termed non-hydrolytic serinolysis, in which the side chain hydroxyl group of the serine supplies its oxygen atom to form the C-terminus of the beta chain, while the remainder of the serine residue undergoes an oxidative deamination to produce ammonia and the pyruvoyl group blocking the N-terminus of the alpha chain.

The catalysed reaction is S-adenosyl-L-methionine + H(+) = S-adenosyl 3-(methylsulfanyl)propylamine + CO2. It participates in amine and polyamine biosynthesis; S-adenosylmethioninamine biosynthesis; S-adenosylmethioninamine from S-adenosyl-L-methionine: step 1/1. This is S-adenosylmethionine decarboxylase proenzyme (SAMDC) from Solanum chilense (Tomato).